The sequence spans 79 residues: Dolichyl-diphosphooligosaccharide--protein glycosyltransferase subunit TMEM258 (79 aa).

Met-1 carries the N-acetylmethionine modification. A run of 2 helical transmembrane segments spans residues 17-37 (VFPH…AWFF) and 59-79 (VASL…GIYI).

This sequence belongs to the OST5 family. Component of the oligosaccharyltransferase (OST) complex. OST exists in two different complex forms which contain common core subunits RPN1, RPN2, OST48, OST4, DAD1 and TMEM258, either STT3A or STT3B as catalytic subunits, and form-specific accessory subunits. STT3A complex assembly occurs through the formation of 3 subcomplexes. Subcomplex 1 contains RPN1 and TMEM258, subcomplex 2 contains the STT3A-specific subunits STT3A, DC2/OSTC, and KCP2 as well as the core subunit OST4, and subcomplex 3 contains RPN2, DAD1, and OST48. The STT3A complex can form stable complexes with the Sec61 complex or with both the Sec61 and TRAP complexes.

The protein localises to the membrane. Its subcellular location is the endoplasmic reticulum. It localises to the cytoplasm. Its pathway is protein modification; protein glycosylation. Functionally, subunit of the oligosaccharyl transferase (OST) complex that catalyzes the initial transfer of a defined glycan (Glc(3)Man(9)GlcNAc(2) in eukaryotes) from the lipid carrier dolichol-pyrophosphate to an asparagine residue within an Asn-X-Ser/Thr consensus motif in nascent polypeptide chains, the first step in protein N-glycosylation. N-glycosylation occurs cotranslationally and the complex associates with the Sec61 complex at the channel-forming translocon complex that mediates protein translocation across the endoplasmic reticulum (ER). All subunits are required for a maximal enzyme activity. Involved in ER homeostasis in the colonic epithelium. The polypeptide is Dolichyl-diphosphooligosaccharide--protein glycosyltransferase subunit TMEM258 (Bos taurus (Bovine)).